A 266-amino-acid chain; its full sequence is Interleukin-1 beta (266 aa).

Residues 1-114 constitute a propeptide that is removed on maturation; sequence MAAVPELSSE…DTWDEEYESD (114 aa).

The protein belongs to the IL-1 family. Monomer. In its precursor form, weakly interacts with full-length MEFV; the mature cytokine does not interact at all. Interacts with integrins ITGAV:ITGBV and ITGA5:ITGB1; integrin-binding is required for IL1B signaling. Interacts with cargo receptor TMED10; the interaction is direct and is required for the secretion of IL1B mature form. Interacts with HSP90AB1; the interaction facilitates cargo translocation into the ERGIC. Interacts with HSP90B1; the interaction facilitates cargo translocation into the ERGIC.

It localises to the cytoplasm. The protein resides in the cytosol. Its subcellular location is the secreted. It is found in the lysosome. The protein localises to the extracellular exosome. Its function is as follows. Potent pro-inflammatory cytokine. Initially discovered as the major endogenous pyrogen, induces prostaglandin synthesis, neutrophil influx and activation, T-cell activation and cytokine production, B-cell activation and antibody production, and fibroblast proliferation and collagen production. Promotes Th17 differentiation of T-cells. Synergizes with IL12/interleukin-12 to induce IFNG synthesis from T-helper 1 (Th1) cells. Plays a role in angiogenesis by inducing VEGF production synergistically with TNF and IL6. Involved in transduction of inflammation downstream of pyroptosis: its mature form is specifically released in the extracellular milieu by passing through the gasdermin-D (GSDMD) pore. The protein is Interleukin-1 beta (IL1B) of Cavia porcellus (Guinea pig).